The chain runs to 352 residues: UDP-N-acetylglucosamine--N-acetylmuramyl-(pentapeptide) pyrophosphoryl-undecaprenol N-acetylglucosamine transferase (352 aa).

The UDP-N-acetyl-alpha-D-glucosamine site is built by Ser195 and Gln287.

It belongs to the glycosyltransferase 28 family. MurG subfamily.

It is found in the cell membrane. It carries out the reaction Mur2Ac(oyl-L-Ala-gamma-D-Glu-L-Lys-D-Ala-D-Ala)-di-trans,octa-cis-undecaprenyl diphosphate + UDP-N-acetyl-alpha-D-glucosamine = beta-D-GlcNAc-(1-&gt;4)-Mur2Ac(oyl-L-Ala-gamma-D-Glu-L-Lys-D-Ala-D-Ala)-di-trans,octa-cis-undecaprenyl diphosphate + UDP + H(+). It functions in the pathway cell wall biogenesis; peptidoglycan biosynthesis. In terms of biological role, cell wall formation. Catalyzes the transfer of a GlcNAc subunit on undecaprenyl-pyrophosphoryl-MurNAc-pentapeptide (lipid intermediate I) to form undecaprenyl-pyrophosphoryl-MurNAc-(pentapeptide)GlcNAc (lipid intermediate II). The chain is UDP-N-acetylglucosamine--N-acetylmuramyl-(pentapeptide) pyrophosphoryl-undecaprenol N-acetylglucosamine transferase from Streptococcus pneumoniae (strain JJA).